Consider the following 140-residue polypeptide: Large ribosomal subunit protein uL13 (140 aa).

The protein belongs to the universal ribosomal protein uL13 family. As to quaternary structure, part of the 50S ribosomal subunit.

Functionally, this protein is one of the early assembly proteins of the 50S ribosomal subunit, although it is not seen to bind rRNA by itself. It is important during the early stages of 50S assembly. In Methanosarcina barkeri (strain Fusaro / DSM 804), this protein is Large ribosomal subunit protein uL13.